The chain runs to 294 residues: NAD kinase (294 aa).

The Proton acceptor role is filled by Asp-74. Residues 74–75 (DG), Arg-79, 149–150 (NE), Asp-179, 190–195 (TGYSMS), and Ala-214 contribute to the NAD(+) site.

It belongs to the NAD kinase family. A divalent metal cation serves as cofactor.

The protein localises to the cytoplasm. The catalysed reaction is NAD(+) + ATP = ADP + NADP(+) + H(+). In terms of biological role, involved in the regulation of the intracellular balance of NAD and NADP, and is a key enzyme in the biosynthesis of NADP. Catalyzes specifically the phosphorylation on 2'-hydroxyl of the adenosine moiety of NAD to yield NADP. In Flavobacterium psychrophilum (strain ATCC 49511 / DSM 21280 / CIP 103535 / JIP02/86), this protein is NAD kinase.